A 251-amino-acid polypeptide reads, in one-letter code: Flap endonuclease Xni (251 aa).

Aspartate 104 serves as a coordination point for Mg(2+). A 5'-3' exonuclease domain is found at 160 to 249 (VLPRQLPDYW…IDGNLQQLRL (90 aa)). Leucine 171, alanine 172, proline 180, valine 182, and isoleucine 185 together coordinate K(+). The interaction with DNA stretch occupies residues 184-189 (GIGPKS).

This sequence belongs to the Xni family. Requires Mg(2+) as cofactor. K(+) serves as cofactor.

Has flap endonuclease activity. During DNA replication, flap endonucleases cleave the 5'-overhanging flap structure that is generated by displacement synthesis when DNA polymerase encounters the 5'-end of a downstream Okazaki fragment. This chain is Flap endonuclease Xni, found in Salmonella schwarzengrund (strain CVM19633).